Reading from the N-terminus, the 183-residue chain is Inosine/xanthosine triphosphatase (183 aa).

Residue D75 coordinates Mg(2+). D75–G76 contacts substrate.

Belongs to the YjjX NTPase family. Homodimer. Mg(2+) serves as cofactor. Mn(2+) is required as a cofactor.

It catalyses the reaction XTP + H2O = XDP + phosphate + H(+). The enzyme catalyses ITP + H2O = IDP + phosphate + H(+). Functionally, phosphatase that hydrolyzes non-canonical purine nucleotides such as XTP and ITP to their respective diphosphate derivatives. Probably excludes non-canonical purines from DNA/RNA precursor pool, thus preventing their incorporation into DNA/RNA and avoiding chromosomal lesions. The protein is Inosine/xanthosine triphosphatase of Vibrio vulnificus (strain CMCP6).